A 31-amino-acid chain; its full sequence is Cyclotide vibi-G (31 aa).

A cross-link (cyclopeptide (Gly-Asn)) is located at residues 1–31; that stretch reads GTFPCGESCVFIPCLTSAIGCSCKSKVCYKN. 3 cysteine pairs are disulfide-bonded: Cys5–Cys21, Cys9–Cys23, and Cys14–Cys28.

In terms of processing, this is a cyclic peptide.

Probably participates in a plant defense mechanism. Has cytotoxic activity, active against a human lymphoma cell line with an IC(50) of 0.96 uM. The polypeptide is Cyclotide vibi-G (Viola biflora (Yellow wood violet)).